We begin with the raw amino-acid sequence, 283 residues long: MSFTSRLKKELFIKAQNLVPQHQLSRVVGKVAASENPILKAAVIHAFKTKYGIDLSIAEQGNALKYKSFNDFFTRALKDGVRLVDENPDSIVSPADGAISQIGKITAGEVFQAKGQSFSVEKLIGDPQLAQPFQEGEFATVYLSPRDYHRVHMPFSGTLTETLYVPGELFSVNQVTAENVPGLFARNERMVCLFDTELGRMAVVLVGAMIVAGIETVATGKVKPSGRIELQHHELKLEKGAELGRFYLGSTAIILFEKDKIEWEKRFKAESVVVMGERMGHTL.

Residues D96, H152, and S250 each act as charge relay system; for autoendoproteolytic cleavage activity in the active site. S250 (schiff-base intermediate with substrate; via pyruvic acid; for decarboxylase activity) is an active-site residue. S250 carries the pyruvic acid (Ser); by autocatalysis modification.

It belongs to the phosphatidylserine decarboxylase family. PSD-B subfamily. Prokaryotic type I sub-subfamily. In terms of assembly, heterodimer of a large membrane-associated beta subunit and a small pyruvoyl-containing alpha subunit. The cofactor is pyruvate. Is synthesized initially as an inactive proenzyme. Formation of the active enzyme involves a self-maturation process in which the active site pyruvoyl group is generated from an internal serine residue via an autocatalytic post-translational modification. Two non-identical subunits are generated from the proenzyme in this reaction, and the pyruvate is formed at the N-terminus of the alpha chain, which is derived from the carboxyl end of the proenzyme. The autoendoproteolytic cleavage occurs by a canonical serine protease mechanism, in which the side chain hydroxyl group of the serine supplies its oxygen atom to form the C-terminus of the beta chain, while the remainder of the serine residue undergoes an oxidative deamination to produce ammonia and the pyruvoyl prosthetic group on the alpha chain. During this reaction, the Ser that is part of the protease active site of the proenzyme becomes the pyruvoyl prosthetic group, which constitutes an essential element of the active site of the mature decarboxylase.

The protein resides in the cell membrane. The enzyme catalyses a 1,2-diacyl-sn-glycero-3-phospho-L-serine + H(+) = a 1,2-diacyl-sn-glycero-3-phosphoethanolamine + CO2. It participates in phospholipid metabolism; phosphatidylethanolamine biosynthesis; phosphatidylethanolamine from CDP-diacylglycerol: step 2/2. Its function is as follows. Catalyzes the formation of phosphatidylethanolamine (PtdEtn) from phosphatidylserine (PtdSer). This chain is Phosphatidylserine decarboxylase proenzyme, found in Acinetobacter baumannii (strain AB0057).